The following is a 156-amino-acid chain: Small ribosomal subunit protein uS7 (156 aa).

It belongs to the universal ribosomal protein uS7 family. As to quaternary structure, part of the 30S ribosomal subunit. Contacts proteins S9 and S11.

Functionally, one of the primary rRNA binding proteins, it binds directly to 16S rRNA where it nucleates assembly of the head domain of the 30S subunit. Is located at the subunit interface close to the decoding center, probably blocks exit of the E-site tRNA. This chain is Small ribosomal subunit protein uS7, found in Synechococcus sp. (strain RCC307).